The primary structure comprises 482 residues: G patch domain-containing protein 2-like (482 aa).

S31, S86, and S88 each carry phosphoserine. Residue T91 is modified to Phosphothreonine. K196 participates in a covalent cross-link: Glycyl lysine isopeptide (Lys-Gly) (interchain with G-Cter in SUMO2). The span at 198-214 (GRKERMECETDEQKQGS) shows a compositional bias: basic and acidic residues. 2 disordered regions span residues 198–247 (GRKE…DDEQ) and 413–482 (KRKR…PGYS). The span at 220 to 230 (ECETSSVCSSS) shows a compositional bias: low complexity. A compositionally biased stretch (polar residues) spans 439-450 (TPASQAPKSPSS). Residues S447 and S449 each carry the phosphoserine modification. Residues 456–469 (TSAAEKATDATTAT) are compositionally biased toward low complexity.

The sequence is that of G patch domain-containing protein 2-like (GPATCH2L) from Homo sapiens (Human).